Here is a 151-residue protein sequence, read N- to C-terminus: UPF0178 protein GSU0171 (151 aa).

The protein belongs to the UPF0178 family.

The protein is UPF0178 protein GSU0171 of Geobacter sulfurreducens (strain ATCC 51573 / DSM 12127 / PCA).